The chain runs to 748 residues: Histone-lysine N-methyltransferase EZH2 (748 aa).

Acidic residues predominate over residues 184–199; sequence YEDDEDGDDNQDDEQD. Disordered regions lie at residues 184–220 and 342–428; these read YEDD…LRKF and AERI…NIEP. Residues 200–220 are compositionally biased toward basic and acidic residues; that stretch reads DTAKDQDDNMEDKETQPLRKF. Over residues 347–359 the composition is skewed to basic residues; that stretch reads TPPKRPSGRRRGR. A compositionally biased stretch (polar residues) spans 362–374; sequence NNTSRPSTPTVNV. Basic and acidic residues predominate over residues 376–387; it reads EAKDTDSDREAG. The 103-residue stretch at 505–607 folds into the CXC domain; sequence CRKIQLKKDG…SKNVSCKNCS (103 aa). One can recognise an SET domain in the interval 614–729; it reads KHLLLAPSDV…TGEELFFDYR (116 aa).

It belongs to the class V-like SAM-binding methyltransferase superfamily. Histone-lysine methyltransferase family. EZ subfamily. Component of the prc2/eed-ezh2 complex.

Its subcellular location is the nucleus. The enzyme catalyses L-lysyl(27)-[histone H3] + 3 S-adenosyl-L-methionine = N(6),N(6),N(6)-trimethyl-L-lysyl(27)-[histone H3] + 3 S-adenosyl-L-homocysteine + 3 H(+). Its function is as follows. Polycomb group (PcG) protein. Catalytic subunit of the prc2/eed-ezh2 complex, which methylates 'Lys-9' and 'Lys-27' of histone H3, leading to transcriptional repression of the affected target gene. May repress transcription of the egr2 and en2 genes. May regulate the circadian clock via histone methylation at the promoter of the circadian genes. This chain is Histone-lysine N-methyltransferase EZH2 (ezh2-a), found in Xenopus laevis (African clawed frog).